Consider the following 391-residue polypeptide: Argininosuccinate synthase (391 aa).

Ala6–Thr14 contributes to the ATP binding site. Tyr84 lines the L-citrulline pocket. Residue Gly114 coordinates ATP. The L-aspartate site is built by Thr116, Asn120, and Asp121. Asn120 contacts L-citrulline. L-citrulline is bound by residues Arg124, Ser171, Ser180, Glu253, and Tyr265.

This sequence belongs to the argininosuccinate synthase family. Type 1 subfamily. Homotetramer.

The protein resides in the cytoplasm. It catalyses the reaction L-citrulline + L-aspartate + ATP = 2-(N(omega)-L-arginino)succinate + AMP + diphosphate + H(+). Its pathway is amino-acid biosynthesis; L-arginine biosynthesis; L-arginine from L-ornithine and carbamoyl phosphate: step 2/3. In Sulfolobus acidocaldarius (strain ATCC 33909 / DSM 639 / JCM 8929 / NBRC 15157 / NCIMB 11770), this protein is Argininosuccinate synthase.